We begin with the raw amino-acid sequence, 336 residues long: Serpentine receptor class delta-51 (336 aa).

The next 7 membrane-spanning stretches (helical) occupy residues 14-34 (VYYSLNVTLALSINILLLFIM), 48-68 (YLFNTALFEIIVSLSTYFAQC), 93-113 (CFVTFAVVQCSVVAASFSILL), 133-153 (ATTFIIFSFFPTVMLLFQLLT), 188-208 (AAIIAQSLISLGVYMSPLIAF), 237-257 (GLLIQTLIPFCVYIPPYSYFL), and 275-295 (IFGSFTAFINPLLTFYFVLPY).

It belongs to the nematode receptor-like protein srd family.

It is found in the membrane. The polypeptide is Serpentine receptor class delta-51 (srd-51) (Caenorhabditis elegans).